The primary structure comprises 393 residues: Glutamyl-tRNA reductase (393 aa).

Substrate is bound by residues 47 to 50, Ser98, 103 to 105, and Gln109; these read TCGR and ETD. Cys48 acts as the Nucleophile in catalysis. An NADP(+)-binding site is contributed by 177–182; sequence GAGAVG.

This sequence belongs to the glutamyl-tRNA reductase family. Homodimer.

The catalysed reaction is (S)-4-amino-5-oxopentanoate + tRNA(Glu) + NADP(+) = L-glutamyl-tRNA(Glu) + NADPH + H(+). It participates in porphyrin-containing compound metabolism; protoporphyrin-IX biosynthesis; 5-aminolevulinate from L-glutamyl-tRNA(Glu): step 1/2. Its function is as follows. Catalyzes the NADPH-dependent reduction of glutamyl-tRNA(Glu) to glutamate 1-semialdehyde (GSA). In Pyrobaculum islandicum (strain DSM 4184 / JCM 9189 / GEO3), this protein is Glutamyl-tRNA reductase.